Consider the following 482-residue polypeptide: Guanine nucleotide exchange factor SRM1 (482 aa).

Residues 1–11 (MVKRTVATNGD) show a composition bias toward polar residues. The segment at 1–22 (MVKRTVATNGDASGAHRAKKMS) is disordered. The Nuclear localization signal motif lies at 15–26 (AHRAKKMSKTHA). RCC1 repeat units lie at residues 45–101 (PLDI…ALDE), 103–152 (SNVW…TPAK), 183–238 (NGEV…FLDE), 239–291 (EGMV…ALTK), 292–347 (DNKL…ILSQ), 349–411 (GDLY…AVAQ), and 412–466 (NGIA…SGGV). The segment at 128-158 (KDMDADDSSDDEDGDLNELESTPAKIPRESF) is disordered. Positions 131 to 145 (DADDSSDDEDGDLNE) are enriched in acidic residues. Ser135 and Ser136 each carry phosphoserine.

In terms of assembly, component of a multicomponent complex composed of six to seven proteins, which has a collective molecular mass greater than 150 kDa. Interacts with GSP1 and YRB2. Phosphorylated; possibly by KSP1.

Its subcellular location is the nucleus. In terms of biological role, guanine nucleotide exchange factor that promotes the exchange of GSP1/GSP2-bound GDP by GTP and controls RNA metabolism and transport. Involved in yeast pheromone response pathway and in mRNA metabolism. Involved in nuclear pore complex (NPC) assembly and required for mRNA and ribosome nuclear export. Binds chromatin and is involved NPC-mediated transcriptional control. This Saccharomyces cerevisiae (strain ATCC 204508 / S288c) (Baker's yeast) protein is Guanine nucleotide exchange factor SRM1 (SRM1).